The following is a 605-amino-acid chain: Translation factor GUF1 homolog, chloroplastic (605 aa).

Residues 7–189 (RRIRNFSIIA…RIVQVVPPPR (183 aa)) enclose the tr-type G domain. Residues 16-23 (AHIDHGKS), 82-86 (DTPGH), and 136-139 (NKID) each bind GTP.

Belongs to the TRAFAC class translation factor GTPase superfamily. Classic translation factor GTPase family. LepA subfamily.

The protein resides in the plastid. It is found in the chloroplast. It carries out the reaction GTP + H2O = GDP + phosphate + H(+). Promotes chloroplast protein synthesis. May act as a fidelity factor of the translation reaction, by catalyzing a one-codon backward translocation of tRNAs on improperly translocated ribosomes. The chain is Translation factor GUF1 homolog, chloroplastic from Ostreococcus lucimarinus (strain CCE9901).